Consider the following 291-residue polypeptide: Protease HtpX homolog (291 aa).

Transmembrane regions (helical) follow at residues 4-24 and 38-58; these read VVLFLLTNLAVMLVLSVSARI and MGMLLVFAALIGFGGSFISLL. Zn(2+) is bound at residue H144. The active site involves E145. H148 contributes to the Zn(2+) binding site. Transmembrane regions (helical) follow at residues 152-172 and 199-219; these read GDMVTLTLIQGVVNTFVIFLS and ISSIAFEIMFGILASVVVMCF. Zn(2+) is bound at residue E224.

It belongs to the peptidase M48B family. Zn(2+) is required as a cofactor.

It is found in the cell inner membrane. The sequence is that of Protease HtpX homolog from Chlorobium limicola (strain DSM 245 / NBRC 103803 / 6330).